A 155-amino-acid polypeptide reads, in one-letter code: 6,7-dimethyl-8-ribityllumazine synthase (155 aa).

5-amino-6-(D-ribitylamino)uracil is bound by residues Phe24, 58–60 (AFE), and 82–84 (AVI). Residue 87–88 (ST) participates in (2S)-2-hydroxy-3-oxobutyl phosphate binding. His90 functions as the Proton donor in the catalytic mechanism. Phe115 contributes to the 5-amino-6-(D-ribitylamino)uracil binding site. Arg129 is a binding site for (2S)-2-hydroxy-3-oxobutyl phosphate.

Belongs to the DMRL synthase family.

It carries out the reaction (2S)-2-hydroxy-3-oxobutyl phosphate + 5-amino-6-(D-ribitylamino)uracil = 6,7-dimethyl-8-(1-D-ribityl)lumazine + phosphate + 2 H2O + H(+). It functions in the pathway cofactor biosynthesis; riboflavin biosynthesis; riboflavin from 2-hydroxy-3-oxobutyl phosphate and 5-amino-6-(D-ribitylamino)uracil: step 1/2. Functionally, catalyzes the formation of 6,7-dimethyl-8-ribityllumazine by condensation of 5-amino-6-(D-ribitylamino)uracil with 3,4-dihydroxy-2-butanone 4-phosphate. This is the penultimate step in the biosynthesis of riboflavin. This chain is 6,7-dimethyl-8-ribityllumazine synthase, found in Acetivibrio thermocellus (strain ATCC 27405 / DSM 1237 / JCM 9322 / NBRC 103400 / NCIMB 10682 / NRRL B-4536 / VPI 7372) (Clostridium thermocellum).